The sequence spans 238 residues: ATP synthase subunit a (238 aa).

7 consecutive transmembrane segments (helical) span residues Ser35 to Thr55, Val61 to Val81, Phe94 to Leu114, Ala128 to Ile148, Phe151 to Leu171, Ile190 to Leu210, and Phe211 to Lys231.

Belongs to the ATPase A chain family. As to quaternary structure, F-type ATPases have 2 components, CF(1) - the catalytic core - and CF(0) - the membrane proton channel. CF(1) has five subunits: alpha(3), beta(3), gamma(1), delta(1), epsilon(1). CF(0) has three main subunits: a(1), b(2) and c(9-12). The alpha and beta chains form an alternating ring which encloses part of the gamma chain. CF(1) is attached to CF(0) by a central stalk formed by the gamma and epsilon chains, while a peripheral stalk is formed by the delta and b chains.

It localises to the cell inner membrane. Key component of the proton channel; it plays a direct role in the translocation of protons across the membrane. The polypeptide is ATP synthase subunit a (Solidesulfovibrio magneticus (strain ATCC 700980 / DSM 13731 / RS-1) (Desulfovibrio magneticus)).